The chain runs to 201 residues: Probable calcium-binding protein CML15 (201 aa).

The tract at residues 1-55 is disordered; it reads MGKVRAFFSRKGRGNSSGRSRSMREAAMNVDWSPRPSDLAAAAAAKPRPPAAEDE. EF-hand domains follow at residues 51-86, 87-122, 125-160, and 161-196; these read AAEDETERVFRKFDANGDGRISRAELAALFRSVGHA, VTDDEVARMMQEADSDGDGYISLGEFAAISAPPPGD, AAEEDLRHAFGVFDADGNGVITPAELARVLRGIGEA, and ATVAQCRRMIDGVDRNGDGLINFEEFKLMMAAGAGF. Ca(2+) is bound by residues aspartate 64, asparagine 66, aspartate 68, arginine 70, glutamate 75, aspartate 100, aspartate 102, aspartate 104, tyrosine 106, glutamate 111, aspartate 138, aspartate 140, asparagine 142, glutamate 149, aspartate 174, asparagine 176, aspartate 178, and glutamate 185.

Its function is as follows. Potential calcium sensor. This chain is Probable calcium-binding protein CML15 (CML15), found in Oryza sativa subsp. japonica (Rice).